The following is a 110-amino-acid chain: Protein RALF-like 4 (110 aa).

Residues Met-1 to Ala-23 form the signal peptide. Positions Thr-24–Ala-58 are cleaved as a propeptide — removed in mature form. Intrachain disulfides connect Cys-76/Cys-86 and Cys-99/Cys-105.

It belongs to the plant rapid alkalinization factor (RALF) family. Post-translationally, proteolytically cleaved, probably by S1P, a subtilisin-like serine protease (subtilase).

Its subcellular location is the secreted. In terms of biological role, cell signaling peptide that may regulate plant stress, growth, and development. Mediates a rapid alkalinization of extracellular space by mediating a transient increase in the cytoplasmic Ca(2+) concentration leading to a calcium-dependent signaling events through a cell surface receptor and a concomitant activation of some intracellular mitogen-activated protein kinases. The sequence is that of Protein RALF-like 4 (RALFL4) from Arabidopsis thaliana (Mouse-ear cress).